The chain runs to 463 residues: Kynureninase 2 (463 aa).

Residues leucine 134, threonine 135, 162 to 165 (FPSD), aspartate 247, histidine 250, and tyrosine 272 each bind pyridoxal 5'-phosphate. Lysine 273 carries the N6-(pyridoxal phosphate)lysine modification. Residues tryptophan 312 and asparagine 340 each coordinate pyridoxal 5'-phosphate.

It belongs to the kynureninase family. Homodimer. Pyridoxal 5'-phosphate is required as a cofactor.

The protein localises to the cytoplasm. The catalysed reaction is L-kynurenine + H2O = anthranilate + L-alanine + H(+). The enzyme catalyses 3-hydroxy-L-kynurenine + H2O = 3-hydroxyanthranilate + L-alanine + H(+). The protein operates within amino-acid degradation; L-kynurenine degradation; L-alanine and anthranilate from L-kynurenine: step 1/1. It participates in cofactor biosynthesis; NAD(+) biosynthesis; quinolinate from L-kynurenine: step 2/3. In terms of biological role, catalyzes the cleavage of L-kynurenine (L-Kyn) and L-3-hydroxykynurenine (L-3OHKyn) into anthranilic acid (AA) and 3-hydroxyanthranilic acid (3-OHAA), respectively. This Aspergillus niger (strain ATCC MYA-4892 / CBS 513.88 / FGSC A1513) protein is Kynureninase 2 (bna5-2).